Reading from the N-terminus, the 467-residue chain is Methionine aminopeptidase 2-1 (467 aa).

Basic and acidic residues predominate over residues 1 to 10 (MGSKSPDGHR). A disordered region spans residues 1-105 (MGSKSPDGHR…TPPRVSLPSI (105 aa)). The span at 43–55 (DGDDEDEDGDDDG) shows a compositional bias: acidic residues. The span at 75–90 (KKRKRKSNKKKKKKTS) shows a compositional bias: basic residues. Histidine 219 provides a ligand contact to substrate. 3 residues coordinate a divalent metal cation: aspartate 240, aspartate 251, and histidine 320. Histidine 328 is a substrate binding site. The a divalent metal cation site is built by glutamate 353 and glutamate 448.

The protein belongs to the peptidase M24A family. Methionine aminopeptidase eukaryotic type 2 subfamily. The cofactor is Co(2+). Zn(2+) serves as cofactor. Mn(2+) is required as a cofactor. Requires Fe(2+) as cofactor.

The protein localises to the cytoplasm. It catalyses the reaction Release of N-terminal amino acids, preferentially methionine, from peptides and arylamides.. Its function is as follows. Cotranslationally removes the N-terminal methionine from nascent proteins. The N-terminal methionine is often cleaved when the second residue in the primary sequence is small and uncharged (Met-Ala-, Cys, Gly, Pro, Ser, Thr, or Val). In Arthroderma gypseum (strain ATCC MYA-4604 / CBS 118893) (Microsporum gypseum), this protein is Methionine aminopeptidase 2-1.